A 140-amino-acid polypeptide reads, in one-letter code: HTH-type transcriptional regulator YfmP (140 aa).

The 73-residue stretch at 1-73 (MEWMKIDQVA…LQELQHFMET (73 aa)) folds into the HTH merR-type domain. Residues 6–25 (IDQVAKRSGLTKRTIRFYEE) constitute a DNA-binding region (H-T-H motif).

Repressor of the yfmOP operon. A mutation in yfmP leads to overexpression of yfmO, probably causing a decrease in cellular copper that is eventually responsible for a reduced copper induction of copZA. The sequence is that of HTH-type transcriptional regulator YfmP (yfmP) from Bacillus subtilis (strain 168).